Reading from the N-terminus, the 469-residue chain is MPREILTVSAGQAGNQIGSEFWSQLCAEHGISKEGVLEDWATDMTDRKDVFFYQADDEHYIPRAVMIDLEPRVLDSIKSGPYKNLYNPENFFYDPQGGGAGNNWAKGYAAGERVYEEVMEMIDREAEGSDSLEGFMLLHSIAGGTGSGLGSYLLERMNDRYPKKLIQTYSVFPDADSGDVVVQPYNSLLSMKRLTNHADSVIVLDNAALSKICQDRLHVQVASFAQTNQLVSTVMSASTQTLRYPGYMNNDLVGMIASLIPTPRCHFLTTSYTPFTSDKIEQAKAVRKTTVLDVMRRLLQPKNRLVSMPTTPSRHACYISILNIIQGEVDPTDVHKSLLRIRERNSATFIPWGPASIQVALTKQSPYVQTTHKVSGLMLANHTNIASIFKRTVAQYDQLRKRNAFMPQYQKEAMFEKNLDEFDEARATVQDLIEEYQACEKADYIDYGAGPGYVKGEDRREKGREAVEG.

142–148 is a GTP binding site; that stretch reads AGGTGSG.

This sequence belongs to the tubulin family.

The protein resides in the cytoplasm. The protein localises to the cytoskeleton. Its subcellular location is the microtubule organizing center. It is found in the spindle pole body. In terms of biological role, tubulin is the major constituent of microtubules. The gamma chain is found at microtubule organizing centers (MTOC) such as the spindle poles or the centrosome, suggesting that it is involved in the minus-end nucleation of microtubule assembly. The chain is Tubulin gamma chain (TUB4) from Microbotryum violaceum (Anther smut fungus).